The sequence spans 241 residues: MLALSLLSIVSIASAAGVTAIPEGDNPYTIFPSVAKTASINGFADRIYDQLPECAKECVKQSTSSTPCPYWDTGCLCVMPQFAGAVGNCVAKNCKGKEVGSVESLATSICSSAGVWEPYWMIPSSVSDALAKAADAAAETTAESTTAESTAAETTKAEETSAKETTAAETSKAAESSAPAETSKAEETSKAAETTKAEESSVAQSSSSAADVASVSVEAANAGNMPAVAIGGVIAAVAALF.

The first 20 residues, 1–20 (MLALSLLSIVSIASAAGVTA), serve as a signal peptide directing secretion. One can recognise a CFEM domain in the interval 26–137 (NPYTIFPSVA…DALAKAADAA (112 aa)). 4 disulfides stabilise this stretch: cysteine 54–cysteine 94, cysteine 58–cysteine 89, cysteine 68–cysteine 75, and cysteine 77–cysteine 110. Aspartate 72 contributes to the heme binding site. Low complexity-rich tracts occupy residues 140 to 154 (TTAESTTAESTAAET) and 163 to 182 (KETTAAETSKAAESSAPAET). A disordered region spans residues 140–210 (TTAESTTAES…SVAQSSSSAA (71 aa)). A compositionally biased stretch (basic and acidic residues) spans 183–199 (SKAEETSKAAETTKAEE). Positions 200–210 (SSVAQSSSSAA) are enriched in low complexity. Asparagine 221 carries GPI-anchor amidated asparagine lipidation. Residues 222-241 (AGNMPAVAIGGVIAAVAALF) constitute a propeptide, removed in mature form.

This sequence belongs to the RBT5 family. As to quaternary structure, interacts with PGA7. The GPI-anchor is attached to the protein in the endoplasmic reticulum and serves to target the protein to the cell surface. There, the glucosamine-inositol phospholipid moiety is cleaved off and the GPI-modified mannoprotein is covalently attached via its lipidless GPI glycan remnant to the 1,6-beta-glucan of the outer cell wall layer. Post-translationally, mannosylated.

It localises to the secreted. The protein localises to the cell wall. The protein resides in the cell membrane. GPI-linked hyphal surface heme-binding protein involved in heme-iron utilization. Heme transfer occurs between PGA7, RBT5 and CSA2 supporting a model in which the 3 CFEM proteins cooperate in a heme-acquisition system and form a cross-cell wall heme-transfer cascade. The ability to acquire iron from host tissues is a major virulence factor of pathogenic microorganisms. Required for biofilm formation. The sequence is that of GPI-anchored hemophore RBT5 from Candida albicans (strain SC5314 / ATCC MYA-2876) (Yeast).